Here is a 252-residue protein sequence, read N- to C-terminus: UPF0736 protein OB1207 (252 aa).

It belongs to the UPF0736 family.

In Oceanobacillus iheyensis (strain DSM 14371 / CIP 107618 / JCM 11309 / KCTC 3954 / HTE831), this protein is UPF0736 protein OB1207.